Here is a 205-residue protein sequence, read N- to C-terminus: uncharacterized protein (205 aa).

This is an uncharacterized protein from Caenorhabditis elegans.